The primary structure comprises 594 residues: DNA mismatch repair protein MutL (594 aa).

Belongs to the DNA mismatch repair MutL/HexB family.

Its function is as follows. This protein is involved in the repair of mismatches in DNA. It is required for dam-dependent methyl-directed DNA mismatch repair. May act as a 'molecular matchmaker', a protein that promotes the formation of a stable complex between two or more DNA-binding proteins in an ATP-dependent manner without itself being part of a final effector complex. The polypeptide is DNA mismatch repair protein MutL (Tolumonas auensis (strain DSM 9187 / NBRC 110442 / TA 4)).